The primary structure comprises 586 residues: uncharacterized protein (586 aa).

2 disordered regions span residues V17 to E64 and H80 to N123. Polar residues predominate over residues P28–T37. Low complexity-rich tracts occupy residues S38–S52 and H80–S91. Basic and acidic residues predominate over residues Q94–I110. Residues M112–N123 are compositionally biased toward gly residues. 12 consecutive transmembrane segments (helical) span residues W151–Y171, W191–L211, L218–T238, F243–I263, L283–V303, T317–F337, F375–L395, Y413–L433, L441–I461, M466–I486, I513–T533, and I536–L556.

The protein belongs to the major facilitator superfamily. Feline leukemia virus subgroup C receptor (TC 2.A.1.28.1) family.

The protein localises to the membrane. This is an uncharacterized protein from Caenorhabditis elegans.